A 446-amino-acid polypeptide reads, in one-letter code: MSDYLSVTALTKYIKYKFDQDPHLQSVLLKGELSNFKKHSSGHLYFNLKDNNSVVNAMMFKAQANKLDFNPKEGDEVLIEARVSVYERQGNYQIYVNKMHLDGIGNLYQKLEALKKELKKQGLFDTKHKKEIPRFPKKIAVLTASTGAAIRDIYSTINSRYPLVEQIQISTLVQGKQAKDDIVNKIKYADTLDADVMIVGRGGGSIEDLWNFNEEEVVRAIFEAKTPVISAVGHETDFTLSDFVADVRAATPTQAAVIATPDQVELSQYIKQTELNLSRHIIQIINNKKKHLEHVASYYKFKQPSLLYDQQIQKKDDFERQLNLSITTKLNNALQKVELLTNRINLKDLKQQTLQGIQSRLQLHDSLNKSIINIIDNSKKRLSQRIENLNSLSPSNTMLRGYTIVNKNEQVITSTQSLEKNDEINLQMKDGTVDAIVKKVRCNHNE.

The protein belongs to the XseA family. As to quaternary structure, heterooligomer composed of large and small subunits.

Its subcellular location is the cytoplasm. It catalyses the reaction Exonucleolytic cleavage in either 5'- to 3'- or 3'- to 5'-direction to yield nucleoside 5'-phosphates.. In terms of biological role, bidirectionally degrades single-stranded DNA into large acid-insoluble oligonucleotides, which are then degraded further into small acid-soluble oligonucleotides. This Staphylococcus carnosus (strain TM300) protein is Exodeoxyribonuclease 7 large subunit.